The sequence spans 673 residues: Gametogenetin (673 aa).

The disordered stretch occupies residues 1 to 599 (MGNVQSEPSA…TSTAGASNKG (599 aa)). Basic and acidic residues predominate over residues 14 to 30 (SRKEQASDRASDSRRTP). Low complexity predominate over residues 70-83 (ASSSPLPLTLELPS). The interaction with GGNBP1 stretch occupies residues 125–506 (RGLLEASHRG…APTPPSTLSP (382 aa)). Over residues 161-178 (PAPPPTPLEPRKQLPPAP) the composition is skewed to pro residues. Residues 192-202 (LASSATSPTES) show a composition bias toward polar residues. A compositionally biased stretch (low complexity) spans 257–268 (SASGPLAAKASP). A Phosphoserine modification is found at S399. Low complexity predominate over residues 413–424 (PRRPTPALLAPP). The segment covering 438-475 (RPVPPSPQQIPPLPPPPPTPPATPPPAPPPTPQPPALP) has biased composition (pro residues). Low complexity predominate over residues 504–531 (LSPTAAADQVPAATPATVTSQVPATATA). The tract at residues 511 to 673 (DQVPAATPAT…HYDLQATHST (163 aa)) is interactions with ZNF403/GGNBP2 and OAZ3. Positions 542-551 (TRTRRNKGPR) are enriched in basic residues.

Isoform 1 and isoform 3 interact with FANCL. Isoform 1 interacts with GGNBP1, ZNF403/GGNBP2 and OAZ3. Isoform 2 interacts with GGNBP1. As to expression, testis-specific. Specifically expressed in the germ cells and not in the somatic, Sertoli, or Leydig cells. In adult testis, expression starts in stage VIII pachytene spermatocytes, increases in stage IX and X pachytene spermatocytes, and culminates in stage XI diplotene spermatocytes and the meiotic cells in stage XII. Expression decreases slightly in step 1-3 spermatids, further decreases in step 4-11 spermatids, and is no longer detectable in step 12 spermatids and beyond. Isoform 2 is mainly expressed in testis.

It localises to the cytoplasm. The protein localises to the perinuclear region. It is found in the cytoplasmic vesicle. The protein resides in the nucleus. Its subcellular location is the nucleolus. In terms of biological role, may be involved in spermatogenesis. The polypeptide is Gametogenetin (Ggn) (Mus musculus (Mouse)).